Here is a 274-residue protein sequence, read N- to C-terminus: Large ribosomal subunit protein uL2 (274 aa).

The interval 224-274 (VAMNPVDHPHGGGEGRTSGGRHPVTPWGIPTKGYKTRKNKRSNKLIVQKRK) is disordered. Basic residues predominate over residues 257–274 (YKTRKNKRSNKLIVQKRK).

This sequence belongs to the universal ribosomal protein uL2 family. Part of the 50S ribosomal subunit. Forms a bridge to the 30S subunit in the 70S ribosome.

Functionally, one of the primary rRNA binding proteins. Required for association of the 30S and 50S subunits to form the 70S ribosome, for tRNA binding and peptide bond formation. It has been suggested to have peptidyltransferase activity; this is somewhat controversial. Makes several contacts with the 16S rRNA in the 70S ribosome. The polypeptide is Large ribosomal subunit protein uL2 (Francisella philomiragia subsp. philomiragia (strain ATCC 25017 / CCUG 19701 / FSC 153 / O#319-036)).